The sequence spans 404 residues: Sulfate adenylyltransferase (404 aa).

Belongs to the sulfate adenylyltransferase family.

The enzyme catalyses sulfate + ATP + H(+) = adenosine 5'-phosphosulfate + diphosphate. Its pathway is sulfur metabolism; hydrogen sulfide biosynthesis; sulfite from sulfate: step 1/3. The sequence is that of Sulfate adenylyltransferase from Chlorobaculum tepidum (strain ATCC 49652 / DSM 12025 / NBRC 103806 / TLS) (Chlorobium tepidum).